Consider the following 192-residue polypeptide: Mitochondrial import inner membrane translocase subunit Tim22 (192 aa).

2 disulfides stabilise this stretch: Cys67-Cys139 and Cys158-Cys177. The next 3 membrane-spanning stretches (helical) occupy residues 72 to 92 (VLACVGGFVLGGAFGVFTAGI), 123 to 141 (YAKNFAIVGAMFSCTECLV), and 168 to 188 (AGVKAGAIGCGGFAAFSAAID).

It belongs to the Tim17/Tim22/Tim23 family. In terms of assembly, component of the TIM22 complex, whose core is composed of TIMM22, associated with peripheral protein FXC1/TIMM10B and the 70 kDa heterohexamer. In most cases, the 70 kDa complex is composed of TIMM9 and TIMM10 (TIMM10A or TIMM10B). A small fraction of the 70 kDa complex is composed of TIMM8 (TIMM8A/DDP1 or TIMM8B/DDP2) and TIMM13. The TIM22 complex also contains AGK and TIMM29. Interacts directly with TIMM9, TIMM10A and FXC1/TIMM10B. Interacts (when oxidized) with TIMM29; interaction is direct. Disulfide bonds promote efficient assembly of the TIM22 complex.

Its subcellular location is the mitochondrion inner membrane. Essential core component of the TIM22 complex, a complex that mediates the import and insertion of multi-pass transmembrane proteins into the mitochondrial inner membrane. In the TIM22 complex, it constitutes the voltage-activated and signal-gated channel. Forms a twin-pore translocase that uses the membrane potential as external driving force in 2 voltage-dependent steps. The sequence is that of Mitochondrial import inner membrane translocase subunit Tim22 (Timm22) from Rattus norvegicus (Rat).